The sequence spans 279 residues: Early nodulin-like protein 18 (279 aa).

An N-terminal signal peptide occupies residues 1 to 24; sequence MAGAVATVSVGLAWLGLMAAAASA. Residues 25–133 form the Phytocyanin domain; it reads TQFRVGGGRG…GEKLVVVVMA (109 aa). Cysteine 82 and cysteine 121 are joined by a disulfide. Residue asparagine 83 is glycosylated (N-linked (GlcNAc...) asparagine). A disordered region spans residues 138–256; that stretch reads RHAPPPSPPA…ANDRSGAAAA (119 aa). The segment covering 140–168 has biased composition (pro residues); the sequence is APPPSPPAVPPPVAPVPMPSPASSPPSPA. Low complexity predominate over residues 169–185; that stretch reads PAAATPSLAPSPVATTP. Over residues 186–199 the composition is skewed to pro residues; the sequence is SPSPSVSPMAPAPA. Low complexity-rich tracts occupy residues 212–226 and 234–256; these read AAMAPSPSTTPGGVA and TDGANATTPAAPAANDRSGAAAA. The N-linked (GlcNAc...) asparagine glycan is linked to asparagine 238. Serine 251 carries GPI-anchor amidated serine lipidation. Residues 252–279 constitute a propeptide, removed in mature form; it reads GAAAAAPVVAGVVVTSLGAYIGYAMLAI.

Belongs to the early nodulin-like (ENODL) family. As to expression, specifically expressed in reproductive tissues. Mainly observed in developing seeds and in mature leaves.

The protein localises to the cell membrane. Its function is as follows. May act as a carbohydrate transporter. Promotes tolerance to salt stress in a redox-dependent manner. The chain is Early nodulin-like protein 18 from Oryza sativa subsp. japonica (Rice).